Reading from the N-terminus, the 200-residue chain is MNVWLLKSHTPLGLLPYYSLLDPFCFMNQVDQVKQKLIDWLSSAKKLSEEVIVFTPEVKINLRDLAHNIHIIAHRVALGFKVIYLYLVDIIFPLLKNIQKSQKESSENLQSVLKIVKEQRRSLKQIEDQLSKVQSELAKLREDYLSRRPLSKQDVEELVVRISEQPKFIEKQTEALTEELKLKVEEVAKLIHSFKGMVLN.

This is an uncharacterized protein from Commelina yellow mottle virus (CoYMV).